A 59-amino-acid chain; its full sequence is Large ribosomal subunit protein uL30 (59 aa).

It belongs to the universal ribosomal protein uL30 family. In terms of assembly, part of the 50S ribosomal subunit.

The protein is Large ribosomal subunit protein uL30 of Mycobacterium sp. (strain JLS).